Reading from the N-terminus, the 115-residue chain is Large ribosomal subunit protein uL22 (115 aa).

It belongs to the universal ribosomal protein uL22 family. In terms of assembly, part of the 50S ribosomal subunit.

This protein binds specifically to 23S rRNA; its binding is stimulated by other ribosomal proteins, e.g. L4, L17, and L20. It is important during the early stages of 50S assembly. It makes multiple contacts with different domains of the 23S rRNA in the assembled 50S subunit and ribosome. Its function is as follows. The globular domain of the protein is located near the polypeptide exit tunnel on the outside of the subunit, while an extended beta-hairpin is found that lines the wall of the exit tunnel in the center of the 70S ribosome. The polypeptide is Large ribosomal subunit protein uL22 (Thioalkalivibrio sulfidiphilus (strain HL-EbGR7)).